The following is a 170-amino-acid chain: Adenine phosphoribosyltransferase (170 aa).

It belongs to the purine/pyrimidine phosphoribosyltransferase family. As to quaternary structure, homodimer.

Its subcellular location is the cytoplasm. It carries out the reaction AMP + diphosphate = 5-phospho-alpha-D-ribose 1-diphosphate + adenine. Its pathway is purine metabolism; AMP biosynthesis via salvage pathway; AMP from adenine: step 1/1. Functionally, catalyzes a salvage reaction resulting in the formation of AMP, that is energically less costly than de novo synthesis. The chain is Adenine phosphoribosyltransferase from Bacillus anthracis (strain A0248).